The following is a 191-amino-acid chain: Calcium-activated potassium channel subunit beta-1 (191 aa).

The Cytoplasmic segment spans residues 1–18 (MVKKLVMAQKRGETRALC). The chain crosses the membrane as a helical span at residues 19 to 39 (LGVTMVVCAVITYYILVTTVL). Residues 40-157 (PLYQKSVWTQ…FQRLYGPQAL (118 aa)) are Extracellular-facing. N80 and N142 each carry an N-linked (GlcNAc...) asparagine glycan. Residues 158-178 (LFSLFWPTFLLTGGLLIIAMV) form a helical membrane-spanning segment. At 179 to 191 (KSNQYLSILAAQK) the chain is on the cytoplasmic side.

It belongs to the KCNMB (TC 8.A.14.1) family. KCNMB1 subfamily. Interacts with KCNMA1 tetramer. There are probably 4 molecules of KCMNB1 per KCNMA1 tetramer. In terms of processing, N-glycosylated. In terms of tissue distribution, abundantly expressed in smooth muscle. Low levels of expression in most other tissues. Within the brain, relatively high levels found in hippocampus and corpus callosum.

The protein resides in the membrane. In terms of biological role, regulatory subunit of the calcium activated potassium KCNMA1 (maxiK) channel. Modulates the calcium sensitivity and gating kinetics of KCNMA1, thereby contributing to KCNMA1 channel diversity. Increases the apparent Ca(2+)/voltage sensitivity of the KCNMA1 channel. It also modifies KCNMA1 channel kinetics and alters its pharmacological properties. It slows down the activation and the deactivation kinetics of the channel. Acts as a negative regulator of smooth muscle contraction by enhancing the calcium sensitivity to KCNMA1. Its presence is also a requirement for internal binding of the KCNMA1 channel opener dehydrosoyasaponin I (DHS-1) triterpene glycoside and for external binding of the agonist hormone 17-beta-estradiol (E2). Increases the binding activity of charybdotoxin (CTX) toxin to KCNMA1 peptide blocker by increasing the CTX association rate and decreasing the dissociation rate. This is Calcium-activated potassium channel subunit beta-1 (KCNMB1) from Homo sapiens (Human).